Consider the following 543-residue polypeptide: Chaperonin GroEL 2 (543 aa).

ATP contacts are provided by residues 29–32 (TLGP), 86–90 (DGTTT), glycine 413, 478–480 (NAA), and aspartate 494.

This sequence belongs to the chaperonin (HSP60) family. Forms a cylinder of 14 subunits composed of two heptameric rings stacked back-to-back. Interacts with the co-chaperonin GroES.

Its subcellular location is the cytoplasm. It carries out the reaction ATP + H2O + a folded polypeptide = ADP + phosphate + an unfolded polypeptide.. Its function is as follows. Together with its co-chaperonin GroES, plays an essential role in assisting protein folding. The GroEL-GroES system forms a nano-cage that allows encapsulation of the non-native substrate proteins and provides a physical environment optimized to promote and accelerate protein folding. The protein is Chaperonin GroEL 2 of Thermosynechococcus vestitus (strain NIES-2133 / IAM M-273 / BP-1).